Consider the following 262-residue polypeptide: Adenosylcobinamide-GDP ribazoletransferase (262 aa).

The next 6 membrane-spanning stretches (helical) occupy residues 43–63 (YFGL…WLTQ), 66–86 (LPAG…TGGF), 120–140 (GAIA…ELAL), 146–166 (AGSA…SIIF), 191–211 (LFIL…LAAL), and 242–262 (AAQQ…GSIL).

It belongs to the CobS family. Mg(2+) serves as cofactor.

It is found in the cell inner membrane. The enzyme catalyses alpha-ribazole + adenosylcob(III)inamide-GDP = adenosylcob(III)alamin + GMP + H(+). It carries out the reaction alpha-ribazole 5'-phosphate + adenosylcob(III)inamide-GDP = adenosylcob(III)alamin 5'-phosphate + GMP + H(+). Its pathway is cofactor biosynthesis; adenosylcobalamin biosynthesis; adenosylcobalamin from cob(II)yrinate a,c-diamide: step 7/7. Joins adenosylcobinamide-GDP and alpha-ribazole to generate adenosylcobalamin (Ado-cobalamin). Also synthesizes adenosylcobalamin 5'-phosphate from adenosylcobinamide-GDP and alpha-ribazole 5'-phosphate. This chain is Adenosylcobinamide-GDP ribazoletransferase, found in Shewanella putrefaciens (strain CN-32 / ATCC BAA-453).